A 550-amino-acid polypeptide reads, in one-letter code: MQKFFVTSALPYPNNSSPHLGNLVGALLSGDVYARFKRNQGHEVIYLCGTDEYGTTTMIRARKEGVTCRELCDKYFELHKKVYDWFNIEFDVFGRTSTTKQTEITWEIFNGLYNNGYIEEKTTVQAFCEKCDMYLADTYLKGYCYHDGCRENRVISNGDQCEICQKMIDVNKLINPFCSICLTPPIQKSTDHLYLSLDKLTPLVQQYLDRVEFDSRIMAISKAWLEIGLNPRCITRDLEWGTPIPINLDPKLEKYADKVFYVWFDAPIGYYSILANERDDWREWLNSGVTWVSTQAKDNVPFHSIVFPASVIGSNIELPLIDRICGTDYLLYEGQKFSKSQGVGLFGDKVAEISPKLGINEDYWRFYLMKIRPETQDSSFNLEEFVRIVKTDLVNNIGNFINRVFSLLEKTPYRDLNYQISPEYIEFIKKYEVSMDEFKFRDGLKICLEMSSRGNKFVQSTKPWTMIKDGLDTQEIMTEAVGICWILLNLLKPIIPKSACDMLSNLDTDNQNIFCLIGGSNINIRILNIIKLPFKNIDLKQLREFIEGKN.

The 'HIGH' region signature appears at 10–22 (LPYPNNSSPHLGN). A 'KMSKS' region motif is present at residues 336–340 (KFSKS). K339 contacts ATP.

This sequence belongs to the class-I aminoacyl-tRNA synthetase family.

It carries out the reaction tRNA(Met) + L-methionine + ATP = L-methionyl-tRNA(Met) + AMP + diphosphate. In Acanthamoeba polyphaga mimivirus (APMV), this protein is Methionine--tRNA ligase (MARS).